The chain runs to 398 residues: Alpha-2,8-sialyltransferase 8F (398 aa).

The Cytoplasmic segment spans residues 1–3; it reads MRS. Residues 4 to 24 traverse the membrane as a helical; Signal-anchor for type II membrane protein segment; that stretch reads GGTLFALIGSLMLLLLLRMLW. Residues 25–398 are Lumenal-facing; it reads CPADAPARSR…KLQFSKCETA (374 aa). N-linked (GlcNAc...) asparagine glycosylation is found at Asn66, Asn93, Asn151, and Asn196. 2 cysteine pairs are disulfide-bonded: Cys186-Cys335 and Cys200-Cys395. Substrate contacts are provided by residues Asn214, 236 to 238, and 322 to 324; these read NPS and STG. Residue His370 is the Proton donor/acceptor of the active site.

This sequence belongs to the glycosyltransferase 29 family. Highly expressed in kidney and expressed and all tissues tested.

The protein resides in the golgi apparatus membrane. The catalysed reaction is a ganglioside GM3 + CMP-N-acetyl-beta-neuraminate = a ganglioside GD3 + CMP + H(+). It carries out the reaction a ganglioside GM3 (d18:1(4E)) + CMP-N-acetyl-beta-neuraminate = a ganglioside GD3 (d18:1(4E)) + CMP + H(+). It catalyses the reaction a ganglioside GD1a (d18:1(4E)) + CMP-N-acetyl-beta-neuraminate = a ganglioside GT1a (d18:1(4E)) + CMP + H(+). The enzyme catalyses a ganglioside GD1a + CMP-N-acetyl-beta-neuraminate = a ganglioside GT1a + CMP + H(+). The catalysed reaction is a ganglioside GM1b (d18:1(4E)) + CMP-N-acetyl-beta-neuraminate = a ganglioside GD1c (d18:1(4E)) + CMP + H(+). It carries out the reaction a ganglioside GM1b + CMP-N-acetyl-beta-neuraminate = a ganglioside GD1c + CMP + H(+). It catalyses the reaction a ganglioside GM4 (d18:1(4E)) + CMP-N-acetyl-beta-neuraminate = an N-acetyl-alpha-neuraminosyl-(2-&gt;8)-N-acetyl-alpha-neuraminosyl-(2-&gt;3)-beta-D-galactosyl-(1&lt;-&gt;1')-N-acylsphing-4-enine + CMP + H(+). The enzyme catalyses N-acetyl-alpha-neuraminosyl-(2-&gt;3)-beta-D-galactosyl-(1&lt;-&gt;1')-ceramide + CMP-N-acetyl-beta-neuraminate = N-acetyl-alpha-neuraminosyl-(2-&gt;8)-N-acetyl-alpha-neuraminosyl-(2-&gt;3)-beta-D-galactosyl-(1&lt;-&gt;1')-ceramide + CMP + H(+). The catalysed reaction is a ganglioside GT1b (d18:1(4E)) + CMP-N-acetyl-beta-neuraminate = a ganglioside GQ1b (d18:1(4E)) + CMP + H(+). It carries out the reaction a ganglioside GT1b + CMP-N-acetyl-beta-neuraminate = a ganglioside GQ1b + CMP + H(+). It participates in protein modification; protein glycosylation. Functionally, alpha-2,8-sialyltransferase that prefers O-glycans to N-glycans or glycolipids as acceptor substrates. The minimal acceptor substrate is the NeuAc-alpha-2,3(6)-Gal sequence at the non-reducing end of their carbohydrate groups. In Mus musculus (Mouse), this protein is Alpha-2,8-sialyltransferase 8F.